The chain runs to 356 residues: S-adenosylmethionine:tRNA ribosyltransferase-isomerase (356 aa).

Belongs to the QueA family. As to quaternary structure, monomer.

It localises to the cytoplasm. It catalyses the reaction 7-aminomethyl-7-carbaguanosine(34) in tRNA + S-adenosyl-L-methionine = epoxyqueuosine(34) in tRNA + adenine + L-methionine + 2 H(+). Its pathway is tRNA modification; tRNA-queuosine biosynthesis. In terms of biological role, transfers and isomerizes the ribose moiety from AdoMet to the 7-aminomethyl group of 7-deazaguanine (preQ1-tRNA) to give epoxyqueuosine (oQ-tRNA). This chain is S-adenosylmethionine:tRNA ribosyltransferase-isomerase, found in Xanthomonas campestris pv. campestris (strain B100).